We begin with the raw amino-acid sequence, 220 residues long: Putative tyrosine-protein phosphatase 1 (220 aa).

Residues 67–218 form the Tyrosine-protein phosphatase domain; that stretch reads FKVPLNAELF…LLARKHVRGQ (152 aa).

Belongs to the protein-tyrosine phosphatase family. Non-receptor class CDC14 subfamily.

The catalysed reaction is O-phospho-L-tyrosyl-[protein] + H2O = L-tyrosyl-[protein] + phosphate. Its function is as follows. Could be inactive as the active site cysteine is modified to tryptophan. The protein is Putative tyrosine-protein phosphatase 1 (PTP-1) of Orgyia pseudotsugata multicapsid polyhedrosis virus (OpMNPV).